Here is a 462-residue protein sequence, read N- to C-terminus: Asparagine--tRNA ligase (462 aa).

The protein belongs to the class-II aminoacyl-tRNA synthetase family. Homodimer.

The protein resides in the cytoplasm. It catalyses the reaction tRNA(Asn) + L-asparagine + ATP = L-asparaginyl-tRNA(Asn) + AMP + diphosphate + H(+). The chain is Asparagine--tRNA ligase from Borreliella burgdorferi (strain ATCC 35210 / DSM 4680 / CIP 102532 / B31) (Borrelia burgdorferi).